Consider the following 451-residue polypeptide: Tubulin alpha chain (451 aa).

The short motif at 1 to 4 (MREC) is the MREC motif element. Gln11 contributes to the GTP binding site. Lys40 carries the post-translational modification N6-acetyllysine. GTP is bound by residues Glu71, Ser140, Gly144, Thr145, Thr179, Asn206, and Asn228. Glu71 contributes to the Mg(2+) binding site. The active site involves Glu254. The disordered stretch occupies residues 432–451 (YEEVGVDSVEGEGEEEGEEY). Glu445 carries the 5-glutamyl polyglutamate modification.

It belongs to the tubulin family. As to quaternary structure, dimer of alpha and beta chains. A typical microtubule is a hollow water-filled tube with an outer diameter of 25 nm and an inner diameter of 15 nM. Alpha-beta heterodimers associate head-to-tail to form protofilaments running lengthwise along the microtubule wall with the beta-tubulin subunit facing the microtubule plus end conferring a structural polarity. Microtubules usually have 13 protofilaments but different protofilament numbers can be found in some organisms and specialized cells. Requires Mg(2+) as cofactor. In terms of processing, some glutamate residues at the C-terminus are polyglycylated, resulting in polyglycine chains on the gamma-carboxyl group. Glycylation is mainly limited to tubulin incorporated into axonemes (cilia and flagella) whereas glutamylation is prevalent in neuronal cells, centrioles, axonemes, and the mitotic spindle. Both modifications can coexist on the same protein on adjacent residues, and lowering polyglycylation levels increases polyglutamylation, and reciprocally. The precise function of polyglycylation is still unclear. Post-translationally, some glutamate residues at the C-terminus are polyglutamylated, resulting in polyglutamate chains on the gamma-carboxyl group. Polyglutamylation plays a key role in microtubule severing by spastin (SPAST). SPAST preferentially recognizes and acts on microtubules decorated with short polyglutamate tails: severing activity by SPAST increases as the number of glutamates per tubulin rises from one to eight, but decreases beyond this glutamylation threshold. Acetylation of alpha chains at Lys-40 is located inside the microtubule lumen. This modification has been correlated with increased microtubule stability, intracellular transport and ciliary assembly. In terms of processing, undergoes a tyrosination/detyrosination cycle, the cyclic removal and re-addition of a C-terminal tyrosine residue by the enzymes tubulin tyrosine carboxypeptidase (MATCAP, VASH1 or VASH2) and tubulin tyrosine ligase (TTL), respectively. Post-translationally, tyrosination promotes microtubule interaction with CAP-Gly microtubule plus-end tracking proteins. Tyrosinated tubulins regulate the initiation of dynein-driven motility. Detyrosination is involved in metaphase plate congression by guiding chromosomes during mitosis. Detyrosination increases microtubules-dependent mechanotransduction in dystrophic cardiac and skeletal muscle. In cardiomyocytes, detyrosinated microtubules are required to resist to contractile compression during contraction.

The protein localises to the cytoplasm. It is found in the cytoskeleton. It catalyses the reaction GTP + H2O = GDP + phosphate + H(+). Tubulin is the major constituent of microtubules, a cylinder consisting of laterally associated linear protofilaments composed of alpha- and beta-tubulin heterodimers. Microtubules grow by the addition of GTP-tubulin dimers to the microtubule end, where a stabilizing cap forms. Below the cap, tubulin dimers are in GDP-bound state, owing to GTPase activity of alpha-tubulin. This chain is Tubulin alpha chain, found in Torpedo marmorata (Marbled electric ray).